Consider the following 96-residue polypeptide: Small ribosomal subunit protein uS19 (96 aa).

The protein belongs to the universal ribosomal protein uS19 family.

Protein S19 forms a complex with S13 that binds strongly to the 16S ribosomal RNA. This chain is Small ribosomal subunit protein uS19, found in Solibacter usitatus (strain Ellin6076).